Reading from the N-terminus, the 693-residue chain is MTPQSLLQTTLFLLSLLFLVQGAHGRGHREDFRFCSQRNQTHRSSLHYKPTPDLRISIENSEEALTVHAPFPAAHPASRSFPDPRGLYHFCLYWNRHAGRLHLLYGKRDFLLSDKASSLLCFQHQEESLAQGPPLLATSVTSWWSPQNISLPSAASFTFSFHSPPHTAAHNASVDMCELKRDLQLLSQFLKHPQKASRRPSAAPASQQLQSLESKLTSVRFMGDMVSFEEDRINATVWKLQPTAGLQDLHIHSRQEEEQSEIMEYSVLLPRTLFQRTKGRSGEAEKRLLLVDFSSQALFQDKNSSQVLGEKVLGIVVQNTKVANLTEPVVLTFQHQLQPKNVTLQCVFWVEDPTLSSPGHWSSAGCETVRRETQTSCFCNHLTYFAVLMVSSVEVDAVHKHYLSLLSYVGCVVSALACLVTIAAYLCSRVPLPCRRKPRDYTIKVHMNLLLAVFLLDTSFLLSEPVALTGSEAGCRASAIFLHFSLLTCLSWMGLEGYNLYRLVVEVFGTYVPGYLLKLSAMGWGFPIFLVTLVALVDVDNYGPIILAVHRTPEGVIYPSMCWIRDSLVSYITNLGLFSLVFLFNMAMLATMVVQILRLRPHTQKWSHVLTLLGLSLVLGLPWALIFFSFASGTFQLVVLYLFSIITSFQGFLIFIWYWSMRLQARGGPSPLKSNSDSARLPISSGSTSSSRI.

An N-terminal signal peptide occupies residues 1 to 25 (MTPQSLLQTTLFLLSLLFLVQGAHG). 26-33 (RGHREDFR) contacts heparin. At 26–401 (RGHREDFRFC…SVEVDAVHKH (376 aa)) the chain is on the extracellular side. Disulfide bonds link Cys35/Cys91 and Cys121/Cys177. N-linked (GlcNAc...) asparagine glycosylation is found at Asn39, Asn148, and Asn171. A heparin-binding site is contributed by 190-200 (LKHPQKASRRP). The GAIN-B domain maps to 224–395 (DMVSFEEDRI…AVLMVSSVEV (172 aa)). N-linked (GlcNAc...) asparagine glycosylation is found at Asn234, Asn303, Asn324, and Asn341. 2 cysteine pairs are disulfide-bonded: Cys346/Cys377 and Cys366/Cys379. Residues 346-395 (CVFWVEDPTLSSPGHWSSAGCETVRRETQTSCFCNHLTYFAVLMVSSVEV) are GPS. The interval 384–397 (YFAVLMVSSVEVDA) is stachel. Residues 402–424 (YLSLLSYVGCVVSALACLVTIAA) traverse the membrane as a helical segment. Topologically, residues 425–437 (YLCSRVPLPCRRK) are cytoplasmic. Residues 438–460 (PRDYTIKVHMNLLLAVFLLDTSF) traverse the membrane as a helical segment. The Extracellular segment spans residues 461-465 (LLSEP). A helical transmembrane segment spans residues 466 to 495 (VALTGSEAGCRASAIFLHFSLLTCLSWMGL). An intrachain disulfide couples Cys475 to Cys562. Residues 496–510 (EGYNLYRLVVEVFGT) are Cytoplasmic-facing. Residues 511–533 (YVPGYLLKLSAMGWGFPIFLVTL) traverse the membrane as a helical segment. At 534 to 562 (VALVDVDNYGPIILAVHRTPEGVIYPSMC) the chain is on the extracellular side. Residues 563 to 588 (WIRDSLVSYITNLGLFSLVFLFNMAM) form a helical membrane-spanning segment. Residues 589-602 (LATMVVQILRLRPH) are Cytoplasmic-facing. A helical transmembrane segment spans residues 603–624 (TQKWSHVLTLLGLSLVLGLPWA). Residues 625–628 (LIFF) are Extracellular-facing. The helical transmembrane segment at 629-654 (SFASGTFQLVVLYLFSIITSFQGFLI) threads the bilayer. Residues 655–693 (FIWYWSMRLQARGGPSPLKSNSDSARLPISSGSTSSSRI) are Cytoplasmic-facing. Residues 670–693 (SPLKSNSDSARLPISSGSTSSSRI) are disordered. Positions 684–693 (SSGSTSSSRI) are enriched in low complexity.

It belongs to the G-protein coupled receptor 2 family. LN-TM7 subfamily. As to quaternary structure, heterodimer of 2 chains generated by proteolytic processing; the large extracellular N-terminal fragment (ADGRG1 NT) and the membrane-bound C-terminal fragment (ADGRG1-CT) predominantly remain associated and non-covalently linked. ADGRG1 NT self-associates in a trans-trans manner; the homophilic interaction enhances receptor signaling. Interacts with TGM2. Interacts with heparin; leading to the reduction of ADGRG1 shedding. Interacts with COL3A1. Part of a GPCR-tetraspanin complex at least consisting of ADGRG1, CD81, eventually CD9, and GNA11 in which CD81 is enhancing the association of ADGRG1 with GNA11. In terms of processing, autoproteolytically cleaved into 2 fragments; the large extracellular N-terminal fragment (ADGRG1 NT) and the membrane-bound C-terminal fragment (ADGRG1 CT) predominantly remain associated and non-covalently linked. Shedding to yield the secreted ADGRG1 N-terminal fragment seems to involve metalloprotease(s). Post-translationally, N-glycosylated. Contains sialic acid residues. Ubiquitinated. Undergoes polyubiquitination upon activation. Widely distributed with highest levels found in thyroid gland, brain and heart. Expressed in a great number of tumor cells. Expression is down-regulated in different tumors from highly metastatic cells.

Its subcellular location is the cell membrane. It localises to the secreted. It is found in the membrane raft. Its activity is regulated as follows. Forms a heterodimer of 2 chains generated by proteolytic processing that remain associated through non-covalent interactions mediated by the GAIN-B domain. In the inactivated receptor, the Stachel sequence (also named stalk) is embedded in the GAIN-B domain, where it adopts a beta-strand conformation. On activation, the Stachel moves into the 7 transmembrane region and adopts a twisted hook-shaped configuration that forms contacts within the receptor, leading to coupling of a G-alpha protein, which activates signaling. The cleaved GAIN-B and N-terminal domains can then dissociate from the rest of the receptor. In terms of biological role, adhesion G-protein coupled receptor (aGPCR) for steroid hormone 17alpha-hydroxypregnenolone (17-OH), which is involved in cell adhesion and cell-cell interactions. Ligand binding causes a conformation change that triggers signaling via guanine nucleotide-binding proteins (G proteins) and modulates the activity of downstream effectors, such as RhoA pathway. ADGRG1 is coupled to G(12) and/or G(13) G proteins (GNA12 and GNA13, respectively) and mediates the activation Rho small GTPases. Acts as a potent suppressor of ferroptosis: binding to 17-OH-binding initiates signaling that down-regulates CD36 and alleviates ferroptosis-induced liver injury. Ligand-binding also induces cell adhesion activity via association with proteins such as collagen III/COL3A1 and TGM2. Mediates cell matrix adhesion in developing neurons and hematopoietic stem cells. Involved in cortical development, specifically in maintenance of the pial basement membrane integrity and in cortical lamination: association with COL3A1 in the developing brain inhibits neuronal migration via activation of the RhoA pathway. Together with TGM2, acts as a regulator of myelination and myelin repair in oligodendrocyte precursor cells. Acts as a hemostatic sensor of shear force: G protein-coupled receptor signaling is activated in response to shear force in platelets, promoting G(13) G protein signaling, and platelet shape change and aggregation in a COL3A1-dependent manner. Acts as an inhibitor of VEGFA production thereby inhibiting angiogenesis through a signaling pathway mediated by PRKCA. Plays a role in the maintenance of hematopoietic stem cells in bone marrow niche. Plays an essential role in testis development. This Homo sapiens (Human) protein is Adhesion G-protein coupled receptor G1.